A 317-amino-acid polypeptide reads, in one-letter code: CXXC-type zinc finger protein 5 (317 aa).

Positions 1 to 49 (MSSLSSGPQDTGGSSSSSSNGSSGSGPKAGVADKSAAVAAAAPASVADD) are enriched in low complexity. A disordered region spans residues 1 to 96 (MSSLSSGPQD…GSGGGSMMGG (96 aa)). Residues 83–94 (GGSGGSGGGSMM) show a composition bias toward gly residues. Residues 251–292 (GKKKRKRCGMCAPCRRRINCEQCSSCRNRKTGHQICKFRKCE) form a CXXC-type zinc finger. Residues 252 to 257 (KKKRKR) carry the Nuclear localization signal motif. Residues C258, C261, C264, C270, C273, C276, C286, and C291 each contribute to the Zn(2+) site.

Interacts with DVL1. Interacts with RBPJ.

Its subcellular location is the nucleus. It localises to the cytoplasm. Functionally, may indirectly participate in activation of the NF-kappa-B and MAPK pathways. Acts as a mediator of BMP4-mediated modulation of canonical Wnt signaling activity in neural stem cells. Required for DNA damage-induced ATM phosphorylation, p53 activation and cell cycle arrest. Involved in myelopoiesis. Binds to the oxygen responsive element of COX4I2 and represses its transcription under hypoxia conditions (4% oxygen), as well as normoxia conditions (20% oxygen). May repress COX4I2 transactivation induced by CHCHD2 and RBPJ. Binds preferentially to DNA containing cytidine-phosphate-guanosine (CpG) dinucleotides over CpH (H=A, T, and C), hemimethylated-CpG and hemimethylated-hydroxymethyl-CpG. This is CXXC-type zinc finger protein 5 (CXXC5) from Bos taurus (Bovine).